The primary structure comprises 619 residues: Dihydroxy-acid dehydratase (619 aa).

Position 81 (D81) interacts with Mg(2+). A [2Fe-2S] cluster-binding site is contributed by C122. Positions 123 and 124 each coordinate Mg(2+). An N6-carboxylysine modification is found at K124. C195 contacts [2Fe-2S] cluster. E494 provides a ligand contact to Mg(2+). S520 acts as the Proton acceptor in catalysis.

It belongs to the IlvD/Edd family. In terms of assembly, homodimer. [2Fe-2S] cluster is required as a cofactor. The cofactor is Mg(2+).

The catalysed reaction is (2R)-2,3-dihydroxy-3-methylbutanoate = 3-methyl-2-oxobutanoate + H2O. It catalyses the reaction (2R,3R)-2,3-dihydroxy-3-methylpentanoate = (S)-3-methyl-2-oxopentanoate + H2O. The protein operates within amino-acid biosynthesis; L-isoleucine biosynthesis; L-isoleucine from 2-oxobutanoate: step 3/4. It participates in amino-acid biosynthesis; L-valine biosynthesis; L-valine from pyruvate: step 3/4. Functionally, functions in the biosynthesis of branched-chain amino acids. Catalyzes the dehydration of (2R,3R)-2,3-dihydroxy-3-methylpentanoate (2,3-dihydroxy-3-methylvalerate) into 2-oxo-3-methylpentanoate (2-oxo-3-methylvalerate) and of (2R)-2,3-dihydroxy-3-methylbutanoate (2,3-dihydroxyisovalerate) into 2-oxo-3-methylbutanoate (2-oxoisovalerate), the penultimate precursor to L-isoleucine and L-valine, respectively. The chain is Dihydroxy-acid dehydratase from Shewanella sp. (strain MR-7).